A 567-amino-acid polypeptide reads, in one-letter code: Dihydrolipoyllysine-residue acetyltransferase component of pyruvate dehydrogenase complex (567 aa).

2 Lipoyl-binding domains span residues Ser-2–Glu-75 and Ile-108–Glu-181. N6-lipoyllysine is present on residues Lys-41 and Lys-147. Over residues Ser-192 to Ser-238 the composition is skewed to low complexity. Positions Ser-192–Gln-249 are disordered. The segment covering Asn-239–Gln-249 has biased composition (polar residues). The Peripheral subunit-binding (PSBD) domain maps to His-258 to Val-295. Catalysis depends on residues Cys-484, His-540, and Asp-544.

This sequence belongs to the 2-oxoacid dehydrogenase family. As to quaternary structure, forms a 24-polypeptide structural core with octahedral symmetry. (R)-lipoate serves as cofactor.

It catalyses the reaction N(6)-[(R)-dihydrolipoyl]-L-lysyl-[protein] + acetyl-CoA = N(6)-[(R)-S(8)-acetyldihydrolipoyl]-L-lysyl-[protein] + CoA. Its function is as follows. The pyruvate dehydrogenase complex catalyzes the overall conversion of pyruvate to acetyl-CoA and CO(2). It contains multiple copies of three enzymatic components: pyruvate dehydrogenase (E1), dihydrolipoamide acetyltransferase (E2) and lipoamide dehydrogenase (E3). This is Dihydrolipoyllysine-residue acetyltransferase component of pyruvate dehydrogenase complex (aceF) from Haemophilus influenzae (strain ATCC 51907 / DSM 11121 / KW20 / Rd).